A 198-amino-acid chain; its full sequence is Na(+)-translocating NADH-quinone reductase subunit E (198 aa).

A run of 6 helical transmembrane segments spans residues 11 to 31, 39 to 59, 77 to 97, 110 to 130, 140 to 160, and 176 to 196; these read SIFI…FLAV, FGLG…NNLV, FLNF…LEMV, GIFL…SFMV, IVYG…LAGI, and LGIT…FSGV.

This sequence belongs to the NqrDE/RnfAE family. Composed of six subunits; NqrA, NqrB, NqrC, NqrD, NqrE and NqrF.

The protein localises to the cell inner membrane. The enzyme catalyses a ubiquinone + n Na(+)(in) + NADH + H(+) = a ubiquinol + n Na(+)(out) + NAD(+). NQR complex catalyzes the reduction of ubiquinone-1 to ubiquinol by two successive reactions, coupled with the transport of Na(+) ions from the cytoplasm to the periplasm. NqrA to NqrE are probably involved in the second step, the conversion of ubisemiquinone to ubiquinol. In Vibrio campbellii (strain ATCC BAA-1116), this protein is Na(+)-translocating NADH-quinone reductase subunit E.